Reading from the N-terminus, the 551-residue chain is Protein GPR107 (551 aa).

The N-terminal stretch at 1–33 (MAVPVPLGRFGSFCLRLLRLLALLELLVHPVLG) is a signal peptide. At 40–262 (LKDDVRHKVH…YLSAGEIPLP (223 aa)) the chain is on the extracellular side. Residues N64 and N209 are each glycosylated (N-linked (GlcNAc...) asparagine). C106 and C226 are joined by a disulfide. Residues 263 to 283 (KLYVSMALFFFLSGTIWIHIL) traverse the membrane as a helical segment. Residues 284 to 292 (RKRRNDVFK) lie on the Cytoplasmic side of the membrane. A helical membrane pass occupies residues 293–313 (IHWLMAALPFTKSLSLVFHAI). At 314-336 (DYHYISSQGFPIEGWAVVYYITH) the chain is on the extracellular side. Residues 337-357 (LLKGALLFITIALIGTGWAFI) form a helical membrane-spanning segment. Topologically, residues 358–367 (KHILSDKDKK) are cytoplasmic. Residues 368–388 (IFMIVIPLQVLANVAYIIIES) traverse the membrane as a helical segment. Residues 389–401 (TEEGTTEYGLWKD) lie on the Extracellular side of the membrane. Residues 402-422 (SLFLVDLLCCGAILFPVVWSI) form a helical membrane-spanning segment. Over 423 to 449 (RHLQEASATDGKAAINLAKLRLFRHYY) the chain is Cytoplasmic. Residues 450–470 (VLIVCYIYFTRIIAFLLKFAV) traverse the membrane as a helical segment. The Extracellular segment spans residues 471 to 475 (PFQWK). Residues 476 to 495 (WLYQLLDETATLVFFVLTGY) form a helical membrane-spanning segment. Over 496–551 (KFRPASDNPYLQLSQEDDDLEMESVVTTSGVMENMKKVKKVSNGAVEPQGSWEGTA) the chain is Cytoplasmic. S537 carries the post-translational modification Phosphoserine.

The protein belongs to the LU7TM family. In terms of processing, cleaved by FURIN to yield two fragments that remain associated via a disulfide bond.

The protein localises to the cell membrane. Its subcellular location is the golgi apparatus. It is found in the trans-Golgi network membrane. Functionally, has been proposed to act as a receptor for neuronostatin, a peptide derived from the somatostatin/SST precursor. Involved in blood sugar regulation through the induction of glucagon in response to low glucose. The sequence is that of Protein GPR107 (Gpr107) from Mus musculus (Mouse).